A 231-amino-acid polypeptide reads, in one-letter code: Large ribosomal subunit protein uL1 (231 aa).

The protein belongs to the universal ribosomal protein uL1 family. As to quaternary structure, part of the 50S ribosomal subunit.

Functionally, binds directly to 23S rRNA. The L1 stalk is quite mobile in the ribosome, and is involved in E site tRNA release. Its function is as follows. Protein L1 is also a translational repressor protein, it controls the translation of the L11 operon by binding to its mRNA. The protein is Large ribosomal subunit protein uL1 of Caldanaerobacter subterraneus subsp. tengcongensis (strain DSM 15242 / JCM 11007 / NBRC 100824 / MB4) (Thermoanaerobacter tengcongensis).